The following is a 170-amino-acid chain: Small ribosomal subunit protein bS16 (170 aa).

Positions 109 to 170 are disordered; it reads ALAEAEGGPS…AAESEAPAAE (62 aa). Positions 131–150 are enriched in basic and acidic residues; sequence AKKDEQPTEKAAEPAAEKAA. Low complexity predominate over residues 151-170; it reads EPAAEAPAEAAAESEAPAAE.

This sequence belongs to the bacterial ribosomal protein bS16 family.

The protein is Small ribosomal subunit protein bS16 of Mycolicibacterium gilvum (strain PYR-GCK) (Mycobacterium gilvum (strain PYR-GCK)).